We begin with the raw amino-acid sequence, 130 residues long: Small ribosomal subunit protein uS9 (130 aa).

It belongs to the universal ribosomal protein uS9 family.

This is Small ribosomal subunit protein uS9 from Streptococcus equi subsp. equi (strain 4047).